The following is a 193-amino-acid chain: Cysteine and glycine-rich protein 1 (193 aa).

The region spanning 10 to 61 (CGVCQKTVYFAEEVQCEGNSFHKSCFLCMVCKKNLDSTTVAVHGEEIYCKSC) is the LIM zinc-binding 1 domain. The Nuclear localization signal motif lies at 64–69 (KKYGPK). Phosphoserine is present on S81. N6-acetyllysine is present on K84. A Glycyl lysine isopeptide (Lys-Gly) (interchain with G-Cter in SUMO2) cross-link involves residue K91. N6-acetyllysine is present on residues K112, K131, K137, and K161. The LIM zinc-binding 2 domain maps to 119–170 (CPRCSQAVYAAEKVIGAGKSWHKSCFRCAKCGKGLESTTLADKDGEIYCKGC). S192 bears the Phosphoserine mark.

In terms of assembly, interacts with ASCC1; ASCC2 and TRIP4.

Its subcellular location is the nucleus. Could play a role in neuronal development. The sequence is that of Cysteine and glycine-rich protein 1 (Csrp1) from Rattus norvegicus (Rat).